Here is a 585-residue protein sequence, read N- to C-terminus: Epithelial sodium channel subunit gamma (585 aa).

At 1-55 (MAPGEKIKAKIKKNLPVTGPQAPTIKELMRWYCLNTNTHGCRRIVVSRGRLRRLL) the chain is on the cytoplasmic side. The chain crosses the membrane as a helical span at residues 56-76 (WIGFTLTAVALILWQCALLVF). Residues 77–477 (SFYTVSVSIK…GGQLGLWMSC (401 aa)) are Extracellular-facing. 6 disulfides stabilise this stretch: C100-C219, C308-C393, C330-C389, C334-C385, C343-C370, and C345-C359. The N-linked (GlcNAc...) asparagine glycan is linked to N207. N433 carries N-linked (GlcNAc...) asparagine glycosylation. The chain crosses the membrane as a helical span at residues 478–498 (SVVCVIEIIEVFFIDFFSIIA). Topologically, residues 499–585 (RRQWQKAKEW…LTDTQMLDEL (87 aa)) are cytoplasmic. The interval 513–534 (QAPPCPEAPRSPQGQDNPALDI) is disordered. Positions 559 to 563 (PPPKY) match the PY motif; recruits WW domain-containing proteins and is thereby required for ubiquitination and inhibition of the channel by NEDD4 and NEDD4L motif.

It belongs to the amiloride-sensitive sodium channel (TC 1.A.6) family. SCNN1G subfamily. As to quaternary structure, component of the heterotrimeric epithelial sodium channel (ENaC) composed of an alpha/SCNN1A, a beta/SCNN1B and a gamma/SCNN1G subunit. An additional delta/SCNN1D subunit can replace the alpha/SCNN1A subunit to form an alternative channel with specific properties. Interacts with WWP1 (via WW domains). Interacts with WWP2 (via WW domains); inhibits the channel. Interacts with the full-length immature form of PCSK9 (pro-PCSK9); inhibits ENaC by promoting its proteasomal degradation. Interacts with BPIFA1; the interaction is indirect via SCNN1B and inhibits the proteolytic maturation of SCNN1A and SCNN1G and the activation of ENaC. In terms of processing, phosphorylated on serine and threonine residues. Aldosterone and insulin increase the basal level of phosphorylation. Post-translationally, ubiquitinated. Can be ubiquitinated at multiple sites and undergo monoubiquitination and polyubiquitination. Ubiquitination by NEDD4 or NEDD4L inhibits the ENaC channel through endocytosis, intracellular retention and degradation of its individual subunits. ENaC is activated through the proteolytic maturation of its subunits. Furin cleaves the SCNN1G subunit first, followed by cleavage by prostasin (PRSS8), which results in a stepwise increase in the open probability of the channel due to the release of an inhibitory tract. BPIFA1, which is recruited by the SCNN1B subunit, prevents the proteolytic activation of ENaC. In terms of processing, N-glycosylated. N-linked glycans are processed to complex type during ENaC complex assembly and transport to the plasma membrane.

It is found in the apical cell membrane. It carries out the reaction Na(+)(in) = Na(+)(out). Its activity is regulated as follows. Originally identified and characterized by its inhibition by the diuretic drug amiloride. Its function is as follows. This is one of the three pore-forming subunits of the heterotrimeric epithelial sodium channel (ENaC), a critical regulator of sodium balance and fluid homeostasis. ENaC operates in epithelial tissues, where it mediates the electrodiffusion of sodium ions from extracellular fluid through the apical membrane of cells, with water following osmotically. It plays a key role in maintaining sodium homeostasis through electrogenic sodium reabsorption in the kidneys. Additionally, ENaC is essential for airway surface liquid homeostasis, which is crucial for proper mucus clearance. The chain is Epithelial sodium channel subunit gamma from Pan troglodytes (Chimpanzee).